The chain runs to 345 residues: Dihydroorotate dehydrogenase (quinone) (345 aa).

Residues 65–69 (AGLDK) and Thr-89 each bind FMN. Lys-69 contacts substrate. 114 to 118 (NRMGF) provides a ligand contact to substrate. FMN-binding residues include Asn-142 and Asn-175. Residue Asn-175 participates in substrate binding. Ser-178 serves as the catalytic Nucleophile. Asn-180 contacts substrate. 2 residues coordinate FMN: Lys-220 and Thr-248. 249-250 (NT) contacts substrate. Residues Gly-271, Gly-300, and 321 to 322 (YT) contribute to the FMN site.

This sequence belongs to the dihydroorotate dehydrogenase family. Type 2 subfamily. Monomer. Requires FMN as cofactor.

The protein resides in the cell membrane. It carries out the reaction (S)-dihydroorotate + a quinone = orotate + a quinol. Its pathway is pyrimidine metabolism; UMP biosynthesis via de novo pathway; orotate from (S)-dihydroorotate (quinone route): step 1/1. Its function is as follows. Catalyzes the conversion of dihydroorotate to orotate with quinone as electron acceptor. The polypeptide is Dihydroorotate dehydrogenase (quinone) (Burkholderia multivorans (strain ATCC 17616 / 249)).